The following is a 432-amino-acid chain: Adenylosuccinate synthetase (432 aa).

GTP is bound by residues 12–18 (GDEGKGK) and 40–42 (GHT). Aspartate 13 acts as the Proton acceptor in catalysis. Mg(2+)-binding residues include aspartate 13 and glycine 40. Residues 13–16 (DEGK), 38–41 (NAGH), threonine 128, arginine 142, glutamine 223, threonine 238, and arginine 302 each bind IMP. Histidine 41 acts as the Proton donor in catalysis. 298 to 304 (TVTGRPR) serves as a coordination point for substrate. Residues arginine 304, 330–332 (LLD), and 412–414 (SVG) each bind GTP.

It belongs to the adenylosuccinate synthetase family. Homodimer. Requires Mg(2+) as cofactor.

The protein resides in the cytoplasm. It catalyses the reaction IMP + L-aspartate + GTP = N(6)-(1,2-dicarboxyethyl)-AMP + GDP + phosphate + 2 H(+). The protein operates within purine metabolism; AMP biosynthesis via de novo pathway; AMP from IMP: step 1/2. In terms of biological role, plays an important role in the de novo pathway of purine nucleotide biosynthesis. Catalyzes the first committed step in the biosynthesis of AMP from IMP. This chain is Adenylosuccinate synthetase, found in Limosilactobacillus reuteri (strain DSM 20016) (Lactobacillus reuteri).